Consider the following 427-residue polypeptide: Diaminobutyrate--2-oxoglutarate transaminase (427 aa).

K264 carries the post-translational modification N6-(pyridoxal phosphate)lysine.

The protein belongs to the class-III pyridoxal-phosphate-dependent aminotransferase family. Requires pyridoxal 5'-phosphate as cofactor.

It catalyses the reaction L-2,4-diaminobutanoate + 2-oxoglutarate = L-aspartate 4-semialdehyde + L-glutamate. The protein operates within amine and polyamine biosynthesis; ectoine biosynthesis; L-ectoine from L-aspartate 4-semialdehyde: step 1/3. Functionally, catalyzes reversively the conversion of L-aspartate beta-semialdehyde (ASA) to L-2,4-diaminobutyrate (DABA) by transamination with L-glutamate. This chain is Diaminobutyrate--2-oxoglutarate transaminase (ectB), found in Wolinella succinogenes (strain ATCC 29543 / DSM 1740 / CCUG 13145 / JCM 31913 / LMG 7466 / NCTC 11488 / FDC 602W) (Vibrio succinogenes).